Reading from the N-terminus, the 274-residue chain is MKNTVIALLALLASAGSLAATPWQKISQPIGGSAQSIGAFSNGCIVGAEALPLSATGYQVMRTDQRRYFGHPDLVQFIQRLSNQVHNKGMGTVLIGDMGMPAGGRFNGGHASHQTGLDVDIFLQLPQTRWTSSQLLKPQALDLVASDGKHVVPSLWSPQISQLIKLAAEDSEVTRIFVNPAIKQQLCLDAGSDRQWLRKVRPWFQHRAHMHVRLRCPAGSLECEDQAPPPPGDGCGAELQSWFEPPKPGSTPPVKKTPPPLPPSCQALLDEHVL.

The N-terminal stretch at 1–19 (MKNTVIALLALLASAGSLA) is a signal peptide. 3 disulfide bridges follow: cysteine 44–cysteine 265, cysteine 187–cysteine 235, and cysteine 216–cysteine 223. 6 residues coordinate Zn(2+): histidine 110, histidine 113, aspartate 120, aspartate 147, histidine 150, and histidine 211. Residues 224–263 (EDQAPPPPGDGCGAELQSWFEPPKPGSTPPVKKTPPPLPP) are disordered. Positions 245 to 263 (PPKPGSTPPVKKTPPPLPP) are enriched in pro residues.

The protein belongs to the peptidase M74 family. As to quaternary structure, dimer. It depends on Zn(2+) as a cofactor.

The protein resides in the periplasm. Functionally, murein endopeptidase that cleaves the D-alanyl-meso-2,6-diamino-pimelyl amide bond that connects peptidoglycan strands. Likely plays a role in the removal of murein from the sacculus. The polypeptide is Penicillin-insensitive murein endopeptidase (Klebsiella pneumoniae (strain 342)).